Reading from the N-terminus, the 847-residue chain is Capsid-associated protein AC83 (847 aa).

Residues 1–19 form the signal peptide; sequence MMSGVMLLMLAIFLIIAFT. Residues 148–197 form a C2HC BV-type zinc finger; sequence CVPVPPCDNKSAGLYPMDERLLDTLVLNQHLDKDYSTNAHLYHPTFYLRC. N-linked (GlcNAc...) asparagine; by host glycans are attached at residues Asn156 and Asn211. 2 disulfide bridges follow: Cys208–Cys221 and Cys261–Cys274. Residues 224 to 282 enclose the Chitin-binding type-2 domain; sequence NELCENRPDGYILSYFPSNLLVNQFMQCVNGRHVVGECPANKIFDRNLMSCVEAHPCAF. N-linked (GlcNAc...) asparagine; by host glycans are attached at residues Asn306, Asn337, Asn500, Asn592, Asn613, and Asn639. The segment at 665 to 698 is disordered; it reads DHWVVAPPTAPPPPPEPEPEPEPEPEPEPELPSP. A compositionally biased stretch (acidic residues) spans 681-693; it reads PEPEPEPEPEPEP.

Its subcellular location is the virion. In terms of biological role, plays an essential role in nucleocapsid assembly. Essential for the establishment of efficient per os infection. This chain is Capsid-associated protein AC83 (p95), found in Autographa californica nuclear polyhedrosis virus (AcMNPV).